Reading from the N-terminus, the 34-residue chain is MSDIN-like toxin proprotein 3 (34 aa).

Residues 1 to 10 (MSDINVIRAP) constitute a propeptide that is removed on maturation. The cyclopeptide (Leu-Pro) cross-link spans 11-18 (LLILSILP). A propeptide spanning residues 19–34 (CVGDDIEVLRRGEGLS) is cleaved from the precursor.

Belongs to the MSDIN fungal toxin family. Post-translationally, processed by the macrocyclase-peptidase enzyme POPB to yield a toxic cyclic octapeptide. POPB first removes 10 residues from the N-terminus. Conformational trapping of the remaining peptide forces the enzyme to release this intermediate rather than proceed to macrocyclization. The enzyme rebinds the remaining peptide in a different conformation and catalyzes macrocyclization of the N-terminal 8 residues. As to expression, expressed in basidiocarps.

In terms of biological role, probable toxin that belongs to the MSDIN-like toxin family responsible for a large number of food poisoning cases and deaths. This chain is MSDIN-like toxin proprotein 3, found in Amanita exitialis (Guangzhou destroying angel).